Here is a 430-residue protein sequence, read N- to C-terminus: MNVKVENIEKNVVKLEITVDSEKFNEAVKKSFKKNAKRFNVPGFRKGKAPLNIIKKYYGEGVLFEDAINFCCEDTYPKAIEENNIKPVDYPQIDVVQIGEGKDFIYTAEVTTVPEVKLGEYKGVEVKKVSYEVEDEAVENELKSMQEKNARVSLKEEGEIEKGNIAIIDFKGYVDGKAFEGGEAKDYEIEIGSGTFIGDFEDQLVGLKKDESKEVNVSFPEEYGREDLNGKPATFEATIKDIKVKELPALDDEFAKEVSEFDTLEELKSDIKDRMKKELSEKAKAEYEEAVVEAVGANAEIEIPKVMIEKEIENMVRDLEMRLKYQGLDLKSYYEFTNSSEEKVKEYMRETAEKRVKTDLIMQEIAKVEDIKATEEELKEKAMEVAKQYGQKDVEKTAELIANAQKAYLEIDIVNGKVLDLLVENSKEIA.

One can recognise a PPIase FKBP-type domain in the interval 163 to 248 (GNIAIIDFKG…IKDIKVKELP (86 aa)).

The protein belongs to the FKBP-type PPIase family. Tig subfamily.

The protein localises to the cytoplasm. The catalysed reaction is [protein]-peptidylproline (omega=180) = [protein]-peptidylproline (omega=0). Its function is as follows. Involved in protein export. Acts as a chaperone by maintaining the newly synthesized protein in an open conformation. Functions as a peptidyl-prolyl cis-trans isomerase. The protein is Trigger factor of Clostridium botulinum (strain Langeland / NCTC 10281 / Type F).